We begin with the raw amino-acid sequence, 578 residues long: Leucine-rich repeat-containing protein 15 (578 aa).

Residues 1–21 form the signal peptide; it reads MPLKHYLLLLVGCQAWALGLA. The region spanning 22 to 53 is the LRRNT domain; sequence YYGCPSECTCSRASQVECTGARIVAMPTPLPW. Residues 22–535 are Extracellular-facing; sequence YYGCPSECTC…TWGMTEAQSG (514 aa). LRR repeat units lie at residues 54–75, 78–99, 102–123, 126–147, 150–171, 174–195, 198–219, 222–243, 246–267, 270–291, 294–315, 318–339, 342–363, 366–387, and 390–411; these read NAMS…LFLN, ALIA…AFRN, SLRY…VFQD, NLES…QFSQ, NLRE…AFDH, GLTK…LFQH, NLQV…TFDA, NLQE…LFHN, NLQR…IFMQ, QLNK…VFGP, NLRE…TFSH, QLQV…AFNG, NLRE…VFRS, NLQN…IFAN, and GLTT…IFDH. N-linked (GlcNAc...) asparagine glycosylation is present at asparagine 75. N-linked (GlcNAc...) asparagine glycosylation is present at asparagine 369. The region spanning 423-473 is the LRRCT domain; the sequence is NPWRCDSDILPLHNWLLLNRARLGTDTLPVCSSPANVRGQSLVIININFPG. A disordered region spans residues 476–500; that stretch reads VQGPETPEVPSYPDTPSYPDTTSVS. Residues 536 to 556 traverse the membrane as a helical segment; that stretch reads LAIAAIVIGIIALACSLAACI. The Cytoplasmic segment spans residues 557–578; sequence CCCCCKKRSQAVLMQMKAPNEC.

It is found in the cell membrane. The chain is Leucine-rich repeat-containing protein 15 (Lrrc15) from Rattus norvegicus (Rat).